Consider the following 240-residue polypeptide: UDP-2,3-diacylglucosamine hydrolase (240 aa).

The Mn(2+) site is built by D9, H11, D43, N81, and H116. Position 81-82 (81-82 (NR)) interacts with substrate. Residues D124, S162, K166, K169, and H197 each coordinate substrate. 2 residues coordinate Mn(2+): H197 and H199.

Belongs to the LpxH family. Mn(2+) is required as a cofactor.

The protein resides in the cell inner membrane. The catalysed reaction is UDP-2-N,3-O-bis[(3R)-3-hydroxytetradecanoyl]-alpha-D-glucosamine + H2O = 2-N,3-O-bis[(3R)-3-hydroxytetradecanoyl]-alpha-D-glucosaminyl 1-phosphate + UMP + 2 H(+). It functions in the pathway glycolipid biosynthesis; lipid IV(A) biosynthesis; lipid IV(A) from (3R)-3-hydroxytetradecanoyl-[acyl-carrier-protein] and UDP-N-acetyl-alpha-D-glucosamine: step 4/6. Functionally, hydrolyzes the pyrophosphate bond of UDP-2,3-diacylglucosamine to yield 2,3-diacylglucosamine 1-phosphate (lipid X) and UMP by catalyzing the attack of water at the alpha-P atom. Involved in the biosynthesis of lipid A, a phosphorylated glycolipid that anchors the lipopolysaccharide to the outer membrane of the cell. The sequence is that of UDP-2,3-diacylglucosamine hydrolase from Neisseria meningitidis serogroup B (strain ATCC BAA-335 / MC58).